Consider the following 955-residue polypeptide: Glutamyl aminopeptidase (955 aa).

Residues Met-1–His-17 lie on the Cytoplasmic side of the membrane. Residues Val-18 to Leu-38 form a helical; Signal-anchor for type II membrane protein membrane-spanning segment. The Extracellular segment spans residues Gly-39 to Ala-955. N-linked (GlcNAc...) asparagine glycans are attached at residues Asn-118 and Asn-192. Substrate is bound at residue Glu-218. N-linked (GlcNAc...) asparagine glycosylation is found at Asn-319 and Asn-335. Gly-352 to Asn-356 lines the substrate pocket. His-388 contacts Zn(2+). Residue Glu-389 is the Proton acceptor of the active site. Residues His-392 and Glu-411 each coordinate Zn(2+). Asn-458, Asn-547, Asn-584, Asn-592, Asn-674, Asn-759, Asn-823, and Asn-836 each carry an N-linked (GlcNAc...) asparagine glycan. A substrate-binding site is contributed by Arg-882.

It belongs to the peptidase M1 family. In terms of assembly, homodimer; disulfide-linked. Zn(2+) is required as a cofactor. In terms of processing, N-glycosylated. Glycosylation counts for an increased mass of about 32% of the protein mass (about 48 kDa).

It localises to the cell membrane. It catalyses the reaction Release of N-terminal glutamate (and to a lesser extent aspartate) from a peptide.. Substrate specificity is modulated by calcium which enhances the enzymatic activity for cleavage of acidic residues while reducing its activity with neutral and basic residues. Hydrolytic activity is inhibited by the aminopeptidase inhibitor (Leu and acidic inhibitor) amastatin, but not by bestatin (aminopeptidase inhibitor Leu inhibitor), leupeptin, pepstatin A and PMSF. Its hydrolytic activity is also strongly reduced by zinc ions, with a complete inhibition at 0.5 mM, and moderately inhibited by cobalt and copper ions. Functionally, venom protein that cleaves N-terminal acidic residues from peptides with high potency in presence of calcium. It may have several roles in venom including alteration of blood pressure by cleaving circulating angiotensin-2, general degradation of host tissue, increase of permeability to other venom components, and/or processing of other toxins in the venom. The protein is Glutamyl aminopeptidase of Bitis rhinoceros (West African gaboon viper).